Here is a 215-residue protein sequence, read N- to C-terminus: ATP-dependent Clp protease proteolytic subunit (215 aa).

The Nucleophile role is filled by serine 111. Histidine 136 is an active-site residue.

It belongs to the peptidase S14 family. As to quaternary structure, fourteen ClpP subunits assemble into 2 heptameric rings which stack back to back to give a disk-like structure with a central cavity, resembling the structure of eukaryotic proteasomes.

Its subcellular location is the cytoplasm. It catalyses the reaction Hydrolysis of proteins to small peptides in the presence of ATP and magnesium. alpha-casein is the usual test substrate. In the absence of ATP, only oligopeptides shorter than five residues are hydrolyzed (such as succinyl-Leu-Tyr-|-NHMec, and Leu-Tyr-Leu-|-Tyr-Trp, in which cleavage of the -Tyr-|-Leu- and -Tyr-|-Trp bonds also occurs).. In terms of biological role, cleaves peptides in various proteins in a process that requires ATP hydrolysis. Has a chymotrypsin-like activity. Plays a major role in the degradation of misfolded proteins. This Hamiltonella defensa subsp. Acyrthosiphon pisum (strain 5AT) protein is ATP-dependent Clp protease proteolytic subunit.